A 415-amino-acid chain; its full sequence is Gamma-glutamyl phosphate reductase 1 (415 aa).

This sequence belongs to the gamma-glutamyl phosphate reductase family.

The protein localises to the cytoplasm. The catalysed reaction is L-glutamate 5-semialdehyde + phosphate + NADP(+) = L-glutamyl 5-phosphate + NADPH + H(+). It participates in amino-acid biosynthesis; L-proline biosynthesis; L-glutamate 5-semialdehyde from L-glutamate: step 2/2. In terms of biological role, catalyzes the NADPH-dependent reduction of L-glutamate 5-phosphate into L-glutamate 5-semialdehyde and phosphate. The product spontaneously undergoes cyclization to form 1-pyrroline-5-carboxylate. The sequence is that of Gamma-glutamyl phosphate reductase 1 from Bacillus licheniformis (strain ATCC 14580 / DSM 13 / JCM 2505 / CCUG 7422 / NBRC 12200 / NCIMB 9375 / NCTC 10341 / NRRL NRS-1264 / Gibson 46).